The sequence spans 82 residues: Apovitellenin-1 (82 aa).

This sequence belongs to the apovitellenin family. As to quaternary structure, monomer. Found in egg yolk and in plasma.

Functionally, protein component of the very low density lipoprotein (VLDL) of egg-laying females. Potent lipoprotein lipase inhibitor, preventing the loss of triglycerides from VLDL on their way from the liver to the growing oocytes. This Anas platyrhynchos (Mallard) protein is Apovitellenin-1.